The primary structure comprises 170 residues: UPF0316 protein CLK_3798 (170 aa).

A run of 2 helical transmembrane segments spans residues 1 to 21 (MLSY…LMTI) and 36 to 56 (IIGF…LSGI).

It belongs to the UPF0316 family.

It localises to the cell membrane. The polypeptide is UPF0316 protein CLK_3798 (Clostridium botulinum (strain Loch Maree / Type A3)).